The chain runs to 509 residues: ATP synthase subunit alpha (509 aa).

169–176 (GDRQTGKT) contacts ATP.

The protein belongs to the ATPase alpha/beta chains family. In terms of assembly, F-type ATPases have 2 components, CF(1) - the catalytic core - and CF(0) - the membrane proton channel. CF(1) has five subunits: alpha(3), beta(3), gamma(1), delta(1), epsilon(1). CF(0) has three main subunits: a(1), b(2) and c(9-12). The alpha and beta chains form an alternating ring which encloses part of the gamma chain. CF(1) is attached to CF(0) by a central stalk formed by the gamma and epsilon chains, while a peripheral stalk is formed by the delta and b chains.

The protein localises to the cell inner membrane. The enzyme catalyses ATP + H2O + 4 H(+)(in) = ADP + phosphate + 5 H(+)(out). Its function is as follows. Produces ATP from ADP in the presence of a proton gradient across the membrane. The alpha chain is a regulatory subunit. The polypeptide is ATP synthase subunit alpha (Methylocella silvestris (strain DSM 15510 / CIP 108128 / LMG 27833 / NCIMB 13906 / BL2)).